A 241-amino-acid polypeptide reads, in one-letter code: Octanoyltransferase (241 aa).

The BPL/LPL catalytic domain occupies 38 to 227; it reads AGGPDTLLLL…AVCNALDGAL (190 aa). Substrate is bound by residues 85–92, 157–159, and 170–172; these read RGGKITWH, AIG, and GFA. Cys-188 acts as the Acyl-thioester intermediate in catalysis.

Belongs to the LipB family.

It is found in the cytoplasm. It catalyses the reaction octanoyl-[ACP] + L-lysyl-[protein] = N(6)-octanoyl-L-lysyl-[protein] + holo-[ACP] + H(+). It participates in protein modification; protein lipoylation via endogenous pathway; protein N(6)-(lipoyl)lysine from octanoyl-[acyl-carrier-protein]: step 1/2. Its function is as follows. Catalyzes the transfer of endogenously produced octanoic acid from octanoyl-acyl-carrier-protein onto the lipoyl domains of lipoate-dependent enzymes. Lipoyl-ACP can also act as a substrate although octanoyl-ACP is likely to be the physiological substrate. The chain is Octanoyltransferase from Mycobacterium ulcerans (strain Agy99).